The following is a 484-amino-acid chain: RxLR effector protein PexRD18 (484 aa).

An N-terminal signal peptide occupies residues 1 to 20 (MSHQRILLLLMAAFFAWVSA). Residues 55–79 (RFLRLYDAEVRDTVRGDNDVDREER) carry the RxLR-dEER motif.

The protein belongs to the RxLR effector family.

The protein localises to the secreted. It is found in the host cell membrane. Effector that enhances P.infestans colonization of Nicotiana benthamiana leaves. In Phytophthora infestans (strain T30-4) (Potato late blight agent), this protein is RxLR effector protein PexRD18.